A 99-amino-acid polypeptide reads, in one-letter code: Cytochrome c oxidase subunit 4 isoform 1, mitochondrial (99 aa).

Residues 1 to 73 lie on the Mitochondrial matrix side of the membrane; that stretch reads SVVKREDFSL…TFAEMNRGSN (73 aa). K4 is subject to N6-acetyllysine; alternate. K4 is modified (N6-succinyllysine; alternate). N6-acetyllysine is present on K28. Residues S31 and S33 each carry the phosphoserine modification. The residue at position 35 (K35) is an N6-acetyllysine; alternate. Residue K35 is modified to N6-succinyllysine; alternate. N6-acetyllysine is present on K42. A helical transmembrane segment spans residues 74–99; that stretch reads EWKTVVGTATFFIGFTALIIMWQKRY.

It belongs to the cytochrome c oxidase IV family. In terms of assembly, component of the cytochrome c oxidase (complex IV, CIV), a multisubunit enzyme composed of 14 subunits. The complex is composed of a catalytic core of 3 subunits MT-CO1, MT-CO2 and MT-CO3, encoded in the mitochondrial DNA, and 11 supernumerary subunits COX4I, COX5A, COX5B, COX6A, COX6B, COX6C, COX7A, COX7B, COX7C, COX8 and NDUFA4, which are encoded in the nuclear genome. The complex exists as a monomer or a dimer and forms supercomplexes (SCs) in the inner mitochondrial membrane with NADH-ubiquinone oxidoreductase (complex I, CI) and ubiquinol-cytochrome c oxidoreductase (cytochrome b-c1 complex, complex III, CIII), resulting in different assemblies (supercomplex SCI(1)III(2)IV(1) and megacomplex MCI(2)III(2)IV(2)). Interacts with PHB2; the interaction decreases in absence of SPHK2. Interacts with AFG1L. Interacts with ABCB7; this interaction allows the regulation of cellular iron homeostasis and cellular reactive oxygen species (ROS) levels in cardiomyocytes. Interacts with FLVCR2; this interaction occurs in the absence of heme and is disrupted upon heme binding. Interacts with IRGC.

It localises to the mitochondrion inner membrane. It participates in energy metabolism; oxidative phosphorylation. Component of the cytochrome c oxidase, the last enzyme in the mitochondrial electron transport chain which drives oxidative phosphorylation. The respiratory chain contains 3 multisubunit complexes succinate dehydrogenase (complex II, CII), ubiquinol-cytochrome c oxidoreductase (cytochrome b-c1 complex, complex III, CIII) and cytochrome c oxidase (complex IV, CIV), that cooperate to transfer electrons derived from NADH and succinate to molecular oxygen, creating an electrochemical gradient over the inner membrane that drives transmembrane transport and the ATP synthase. Cytochrome c oxidase is the component of the respiratory chain that catalyzes the reduction of oxygen to water. Electrons originating from reduced cytochrome c in the intermembrane space (IMS) are transferred via the dinuclear copper A center (CU(A)) of subunit 2 and heme A of subunit 1 to the active site in subunit 1, a binuclear center (BNC) formed by heme A3 and copper B (CU(B)). The BNC reduces molecular oxygen to 2 water molecules using 4 electrons from cytochrome c in the IMS and 4 protons from the mitochondrial matrix. The protein is Cytochrome c oxidase subunit 4 isoform 1, mitochondrial (COX4I1) of Trachypithecus cristatus (Silvered leaf-monkey).